A 388-amino-acid polypeptide reads, in one-letter code: Succinate--CoA ligase [ADP-forming] subunit beta (388 aa).

The ATP-grasp domain occupies 9-244 (KQLFAQYGLP…PAQNDAREAH (236 aa)). Residues Lys46, 53–55 (GRG), Glu99, Thr102, and Glu107 each bind ATP. Mg(2+)-binding residues include Asn199 and Asp213. Substrate is bound by residues Asn264 and 321–323 (GIV).

This sequence belongs to the succinate/malate CoA ligase beta subunit family. In terms of assembly, heterotetramer of two alpha and two beta subunits. It depends on Mg(2+) as a cofactor.

It catalyses the reaction succinate + ATP + CoA = succinyl-CoA + ADP + phosphate. The enzyme catalyses GTP + succinate + CoA = succinyl-CoA + GDP + phosphate. It participates in carbohydrate metabolism; tricarboxylic acid cycle; succinate from succinyl-CoA (ligase route): step 1/1. Functionally, succinyl-CoA synthetase functions in the citric acid cycle (TCA), coupling the hydrolysis of succinyl-CoA to the synthesis of either ATP or GTP and thus represents the only step of substrate-level phosphorylation in the TCA. The beta subunit provides nucleotide specificity of the enzyme and binds the substrate succinate, while the binding sites for coenzyme A and phosphate are found in the alpha subunit. The chain is Succinate--CoA ligase [ADP-forming] subunit beta from Edwardsiella ictaluri (strain 93-146).